A 327-amino-acid chain; its full sequence is L-lactate dehydrogenase (327 aa).

NAD(+) contacts are provided by residues Val-18, Asp-39, Lys-44, Tyr-69, and 83–84 (GA). Substrate-binding positions include Gln-86, Arg-92, and 124–127 (NPVD). NAD(+) contacts are provided by residues 122–124 (AAN) and Ser-147. 152–155 (DSAR) serves as a coordination point for substrate. Beta-D-fructose 1,6-bisphosphate contacts are provided by Arg-157 and His-172. His-179 serves as the catalytic Proton acceptor. A Phosphotyrosine modification is found at Tyr-224. Thr-233 contacts substrate.

The protein belongs to the LDH/MDH superfamily. LDH family. As to quaternary structure, homotetramer.

Its subcellular location is the cytoplasm. It carries out the reaction (S)-lactate + NAD(+) = pyruvate + NADH + H(+). Its pathway is fermentation; pyruvate fermentation to lactate; (S)-lactate from pyruvate: step 1/1. Its activity is regulated as follows. Allosterically activated by fructose 1,6-bisphosphate (FBP). Catalyzes the conversion of lactate to pyruvate. This chain is L-lactate dehydrogenase, found in Streptococcus equi subsp. zooepidemicus (strain H70).